A 112-amino-acid chain; its full sequence is Putative membrane protein insertion efficiency factor (112 aa).

Belongs to the UPF0161 family.

The protein resides in the cell inner membrane. Its function is as follows. Could be involved in insertion of integral membrane proteins into the membrane. The sequence is that of Putative membrane protein insertion efficiency factor from Bradyrhizobium diazoefficiens (strain JCM 10833 / BCRC 13528 / IAM 13628 / NBRC 14792 / USDA 110).